We begin with the raw amino-acid sequence, 359 residues long: Src kinase-associated phosphoprotein 2 (359 aa).

S5, S6, and S9 each carry phosphoserine. A homodimerization region spans residues 14–64; that stretch reads PEEIRNLLADVETFVADILKGENLSKKAKEKRESLIKKIKDVKSIYLQEFQ. The tract at residues 66-88 is disordered; sequence KGDAEDGEEYDDPFAGPPDTISL. Y75 is modified (phosphotyrosine). 2 positions are modified to phosphoserine: S87 and S90. The PH domain occupies 116–219; it reads FVLKAGYLEK…WVQQLKFVLQ (104 aa). 2 positions are modified to phosphotyrosine: Y151 and Y197. S223 carries the post-translational modification Phosphoserine. The residue at position 261 (Y261) is a Phosphotyrosine. The tract at residues 264-293 is disordered; it reads LPEEEEDSAPVKVEEQRKMSQDSVHHTSGD. Over residues 275–293 the composition is skewed to basic and acidic residues; sequence KVEEQRKMSQDSVHHTSGD. A phosphoserine mark is found at S283 and S286. Positions 297–358 constitute an SH3 domain; the sequence is DYANFYQGLW…PKAYIMEMYD (62 aa).

Belongs to the SKAP family. In terms of assembly, homodimer. Interacts with PTPNS1. Part of a complex consisting of SKAP2, FYB1 and PTPNS1. Part of a complex consisting of SKAP2, FYB1 and LILRB3. May interact with actin. Interacts with FYB1, which is required for SKAP2 protein stability. Interacts with LAT, GRB2, PTK2B and PRAM1. May interact with FYN, HCK and LYN. Interacts with FASLG. Phosphorylated in resting platelets. Phosphorylated by FYN on Tyr-261 upon T-cell activation. Dephosphorylated on Tyr-75 by PTPN22. As to expression, ubiquitously expressed. Present in platelets (at protein level).

Its subcellular location is the cytoplasm. Its function is as follows. May be involved in B-cell and macrophage adhesion processes. In B-cells, may act by coupling the B-cell receptor (BCR) to integrin activation. May play a role in src signaling pathway. The chain is Src kinase-associated phosphoprotein 2 (SKAP2) from Homo sapiens (Human).